Consider the following 269-residue polypeptide: Rhamnulose-1-phosphate aldolase (269 aa).

The active site involves Glu-119. Zn(2+) contacts are provided by His-142, His-144, and His-214.

The protein belongs to the aldolase class II family. RhaD subfamily. Zn(2+) is required as a cofactor.

The protein resides in the cytoplasm. It catalyses the reaction L-rhamnulose 1-phosphate = (S)-lactaldehyde + dihydroxyacetone phosphate. Its pathway is carbohydrate degradation; L-rhamnose degradation; glycerone phosphate from L-rhamnose: step 3/3. Catalyzes the reversible cleavage of L-rhamnulose-1-phosphate to dihydroxyacetone phosphate (DHAP) and L-lactaldehyde. In Bacteroides thetaiotaomicron (strain ATCC 29148 / DSM 2079 / JCM 5827 / CCUG 10774 / NCTC 10582 / VPI-5482 / E50), this protein is Rhamnulose-1-phosphate aldolase.